Here is a 367-residue protein sequence, read N- to C-terminus: Phospho-N-acetylmuramoyl-pentapeptide-transferase (367 aa).

Transmembrane regions (helical) follow at residues 13 to 33 (ISGI…ALTL), 49 to 69 (LPLL…VPLL), 95 to 115 (MGGI…SNFA), 119 to 139 (LAVS…DWQI), 154 to 174 (LALQ…NQPA), 183 to 203 (WVSF…FVLV), 215 to 235 (IDGL…AIVA), 237 to 257 (TSPA…GFLA), 281 to 301 (AVAL…IFFV), and 347 to 367 (VSSF…IAPF).

The protein belongs to the glycosyltransferase 4 family. MraY subfamily. The cofactor is Mg(2+).

It is found in the cell inner membrane. The catalysed reaction is UDP-N-acetyl-alpha-D-muramoyl-L-alanyl-gamma-D-glutamyl-meso-2,6-diaminopimeloyl-D-alanyl-D-alanine + di-trans,octa-cis-undecaprenyl phosphate = di-trans,octa-cis-undecaprenyl diphospho-N-acetyl-alpha-D-muramoyl-L-alanyl-D-glutamyl-meso-2,6-diaminopimeloyl-D-alanyl-D-alanine + UMP. It functions in the pathway cell wall biogenesis; peptidoglycan biosynthesis. In terms of biological role, catalyzes the initial step of the lipid cycle reactions in the biosynthesis of the cell wall peptidoglycan: transfers peptidoglycan precursor phospho-MurNAc-pentapeptide from UDP-MurNAc-pentapeptide onto the lipid carrier undecaprenyl phosphate, yielding undecaprenyl-pyrophosphoryl-MurNAc-pentapeptide, known as lipid I. In Trichormus variabilis (strain ATCC 29413 / PCC 7937) (Anabaena variabilis), this protein is Phospho-N-acetylmuramoyl-pentapeptide-transferase.